A 189-amino-acid polypeptide reads, in one-letter code: Adenylate kinase homolog MTH_1663 (189 aa).

12–20 (GVPGTGKTT) is a binding site for ATP.

Belongs to the archaeal adenylate kinase family.

The chain is Adenylate kinase homolog MTH_1663 from Methanothermobacter thermautotrophicus (strain ATCC 29096 / DSM 1053 / JCM 10044 / NBRC 100330 / Delta H) (Methanobacterium thermoautotrophicum).